A 302-amino-acid polypeptide reads, in one-letter code: Coenzyme PQQ synthesis protein B (302 aa).

The protein belongs to the PqqB family.

It participates in cofactor biosynthesis; pyrroloquinoline quinone biosynthesis. In terms of biological role, may be involved in the transport of PQQ or its precursor to the periplasm. This Azotobacter vinelandii (strain DJ / ATCC BAA-1303) protein is Coenzyme PQQ synthesis protein B.